A 109-amino-acid chain; its full sequence is Nucleoid-associated protein LJ_0424 (109 aa).

The protein belongs to the YbaB/EbfC family. Homodimer.

It is found in the cytoplasm. The protein localises to the nucleoid. Binds to DNA and alters its conformation. May be involved in regulation of gene expression, nucleoid organization and DNA protection. The sequence is that of Nucleoid-associated protein LJ_0424 from Lactobacillus johnsonii (strain CNCM I-12250 / La1 / NCC 533).